The sequence spans 290 residues: Zinc-finger homeodomain protein 2 (290 aa).

Over residues 1 to 15 (MDFDDHDEGDGDEEM) the composition is skewed to acidic residues. Residues 1–59 (MDFDDHDEGDGDEEMPPMPLSSGYDAPMQPGLGGGGGGVPKPGGGVGGGGGGGGGGGGG) form a disordered region. Residues 31–59 (GLGGGGGGVPKPGGGVGGGGGGGGGGGGG) show a composition bias toward gly residues. A ZF-HD dimerization-type; degenerate zinc finger spans residues 63 to 112 (YRECLKNHAVGIGGHAVDGCGEFMASGEEGSIDALRCAACGCHRNFHRKE). A DNA-binding region (homeobox) is located at residues 226-289 (KKRFRTKFTQ…NNKHTLGKKA (64 aa)).

As to quaternary structure, homo- and heterodimer with other ZFHD proteins.

It localises to the nucleus. Putative transcription factor. The chain is Zinc-finger homeodomain protein 2 (ZHD2) from Oryza sativa subsp. japonica (Rice).